Consider the following 203-residue polypeptide: Large ribosomal subunit protein bL25 (203 aa).

It belongs to the bacterial ribosomal protein bL25 family. CTC subfamily. Part of the 50S ribosomal subunit; part of the 5S rRNA/L5/L18/L25 subcomplex. Contacts the 5S rRNA. Binds to the 5S rRNA independently of L5 and L18.

This is one of the proteins that binds to the 5S RNA in the ribosome where it forms part of the central protuberance. This Rickettsia rickettsii (strain Iowa) protein is Large ribosomal subunit protein bL25.